The following is a 436-amino-acid chain: ATP-dependent protease ATPase subunit HslU (436 aa).

ATP contacts are provided by residues Ile-19, 61 to 65, Asp-249, Glu-314, and Arg-386; that span reads GVGKT.

This sequence belongs to the ClpX chaperone family. HslU subfamily. A double ring-shaped homohexamer of HslV is capped on each side by a ring-shaped HslU homohexamer. The assembly of the HslU/HslV complex is dependent on binding of ATP.

The protein localises to the cytoplasm. ATPase subunit of a proteasome-like degradation complex; this subunit has chaperone activity. The binding of ATP and its subsequent hydrolysis by HslU are essential for unfolding of protein substrates subsequently hydrolyzed by HslV. HslU recognizes the N-terminal part of its protein substrates and unfolds these before they are guided to HslV for hydrolysis. The polypeptide is ATP-dependent protease ATPase subunit HslU (Bartonella henselae (strain ATCC 49882 / DSM 28221 / CCUG 30454 / Houston 1) (Rochalimaea henselae)).